Consider the following 425-residue polypeptide: Dual-specificity RNA methyltransferase RlmN (425 aa).

Glu-136 (proton acceptor) is an active-site residue. One can recognise a Radical SAM core domain in the interval 142–389; it reads GDDRGTLCVS…VRTPRGRDIL (248 aa). Cys-149 and Cys-392 are oxidised to a cystine. [4Fe-4S] cluster contacts are provided by Cys-156, Cys-160, and Cys-163. S-adenosyl-L-methionine-binding positions include 218–219, Ser-250, 272–274, and Asn-349; these read GE and SLH. The S-methylcysteine intermediate role is filled by Cys-392.

It belongs to the radical SAM superfamily. RlmN family. [4Fe-4S] cluster serves as cofactor.

It is found in the cytoplasm. It catalyses the reaction adenosine(2503) in 23S rRNA + 2 reduced [2Fe-2S]-[ferredoxin] + 2 S-adenosyl-L-methionine = 2-methyladenosine(2503) in 23S rRNA + 5'-deoxyadenosine + L-methionine + 2 oxidized [2Fe-2S]-[ferredoxin] + S-adenosyl-L-homocysteine. The catalysed reaction is adenosine(37) in tRNA + 2 reduced [2Fe-2S]-[ferredoxin] + 2 S-adenosyl-L-methionine = 2-methyladenosine(37) in tRNA + 5'-deoxyadenosine + L-methionine + 2 oxidized [2Fe-2S]-[ferredoxin] + S-adenosyl-L-homocysteine. Specifically methylates position 2 of adenine 2503 in 23S rRNA and position 2 of adenine 37 in tRNAs. m2A2503 modification seems to play a crucial role in the proofreading step occurring at the peptidyl transferase center and thus would serve to optimize ribosomal fidelity. This is Dual-specificity RNA methyltransferase RlmN from Methylorubrum populi (strain ATCC BAA-705 / NCIMB 13946 / BJ001) (Methylobacterium populi).